The chain runs to 643 residues: Phosphomethylpyrimidine synthase (643 aa).

Substrate is bound by residues asparagine 248, methionine 277, tyrosine 306, histidine 342, 362 to 364 (SRG), 403 to 406 (DGLR), and glutamate 442. Residue histidine 446 coordinates Zn(2+). Tyrosine 469 lines the substrate pocket. Zn(2+) is bound at residue histidine 510. Residues cysteine 590, cysteine 593, and cysteine 598 each coordinate [4Fe-4S] cluster.

Belongs to the ThiC family. In terms of assembly, homodimer. Requires [4Fe-4S] cluster as cofactor.

It carries out the reaction 5-amino-1-(5-phospho-beta-D-ribosyl)imidazole + S-adenosyl-L-methionine = 4-amino-2-methyl-5-(phosphooxymethyl)pyrimidine + CO + 5'-deoxyadenosine + formate + L-methionine + 3 H(+). Its pathway is cofactor biosynthesis; thiamine diphosphate biosynthesis. Catalyzes the synthesis of the hydroxymethylpyrimidine phosphate (HMP-P) moiety of thiamine from aminoimidazole ribotide (AIR) in a radical S-adenosyl-L-methionine (SAM)-dependent reaction. The polypeptide is Phosphomethylpyrimidine synthase (Paraburkholderia phytofirmans (strain DSM 17436 / LMG 22146 / PsJN) (Burkholderia phytofirmans)).